The chain runs to 251 residues: Octanoyltransferase (251 aa).

A BPL/LPL catalytic domain is found at 56–237; that stretch reads ADTGDEIWVV…RLIANLDGES (182 aa). Substrate-binding positions include 96 to 103, 168 to 170, and 181 to 183; these read RGGQITYH, ALG, and GLS. Residue Cys199 is the Acyl-thioester intermediate of the active site.

Belongs to the LipB family.

The protein resides in the cytoplasm. The enzyme catalyses octanoyl-[ACP] + L-lysyl-[protein] = N(6)-octanoyl-L-lysyl-[protein] + holo-[ACP] + H(+). Its pathway is protein modification; protein lipoylation via endogenous pathway; protein N(6)-(lipoyl)lysine from octanoyl-[acyl-carrier-protein]: step 1/2. Catalyzes the transfer of endogenously produced octanoic acid from octanoyl-acyl-carrier-protein onto the lipoyl domains of lipoate-dependent enzymes. Lipoyl-ACP can also act as a substrate although octanoyl-ACP is likely to be the physiological substrate. The chain is Octanoyltransferase from Burkholderia ambifaria (strain ATCC BAA-244 / DSM 16087 / CCUG 44356 / LMG 19182 / AMMD) (Burkholderia cepacia (strain AMMD)).